The primary structure comprises 301 residues: Glycosyltransferase GlyG (301 aa).

This sequence belongs to the glycosyltransferase 2 family.

Its pathway is protein modification; protein glycosylation. Involved in the polymorphic O-glycosylation of the serine-rich repeat protein PsrP. Catalyzes the third step in glycosylation PsrP in this bacteria. Transfers glucose from UDP-glucose to the terminal glucose moiety of already-glycosylated PsrP (using truncated substrates with PsrP SSR1-GlcNAc-Glc). Has a marked preference for PsrP substrate that has already been modified by GlcNAc and glucose. In vitro has hydrolytic activity against UDP-glucose and to a lesser extent against UDP-galactose. In terms of biological role, also catalyzes the fourth step in glycosylation of the serine-rich repeat protein PsrP in this bacteria. Can transfer the sugar from UDP-glucose (and much less well from UDP-galactose) to the terminal sugar moiety of PsrP-GlcNAc-Glc-Gal or of PsrP-GlcNAc-Glc-Glc. The chain is Glycosyltransferase GlyG from Streptococcus pneumoniae serotype 4 (strain ATCC BAA-334 / TIGR4).